The primary structure comprises 297 residues: MHFWWTAISAGLLCLPQALGRSDSPNYTVEELWKLETTFWDNFLYPANVEQMEAINSTLFTPDVQGRVDITRVFNGSELNTEYIFGLFSDPDHVSLVGVPVDYSIVQFIAQGNIASATTVVTFNATSFGNLLIPVTIDTWIMWDSNGQIVQYDATFRWFGFLLDTLVETLAASINGTTSEATAALTQLLATTICATHDQYCTGANQQYDNNTACYDFLTTAIPLGKDYELGRNTLLCREVHEHMVQYDPALHCPHIGPTGGDYCVDDQTYAQKVLQKYFNQSWIVGVPSTGDIWLGD.

The N-terminal stretch at 1-20 (MHFWWTAISAGLLCLPQALG) is a signal peptide. 7 N-linked (GlcNAc...) asparagine glycosylation sites follow: Asn26, Asn56, Asn75, Asn124, Asn175, Asn210, and Asn280.

Belongs to the bfoA family.

Its function is as follows. Part of the gene cluster that mediates the biosynthesis of bifonsecin B, a dimeric gamma-naphthopyrone. The first step in the biosynthesis of bifonsecin B is the production of gamma-naphthopyrone precursor YWA1 by the non-reducing polyketide synthase albA, via condensation of one acetyl-CoA starter unit with 6 malonyl-CoA units. YWA1 is then methylated by bfoE at position C-6 to yield foncesin which is further methylated at position C-8 by bfoD to produce fonsecin B. A key enzyme in the biosynthetic pathway is the cytochrome P450 monooxygenase bfoB which catalyzes the oxidative dimerization of fonsecin B to bifonsecin B. Bfob also catalyzes the oxidative dimerization of rubrofusarin B into nigerone. The stereoselectivity of bfoB is influenced by the two natural monomeric substrates; homodimerization of fonsecin B yields a stereochemically pure biaryl, M-foncerine B, while rubrofusarin B yields a mixture of enantiomers M- and P-nigerone. The function of bfoA within the bifonsecin B biosynthesis pathway has not been determined yet. The sequence is that of Bifonsecin B biosynthesis cluster protein A from Aspergillus brasiliensis (strain CBS 101740 / IMI 381727 / IBT 21946).